We begin with the raw amino-acid sequence, 172 residues long: Cytochrome b6-f complex iron-sulfur subunit (172 aa).

A helical membrane pass occupies residues 17-39; that stretch reads VFLNALLSSSVGVVVVGTLYPVV. The Rieske domain occupies 61 to 161; the sequence is GKPISVSELL…ATVDGDNVRF (101 aa). The [2Fe-2S] cluster site is built by cysteine 107, histidine 109, cysteine 125, and histidine 128. A disulfide bond links cysteine 112 and cysteine 127.

It belongs to the Rieske iron-sulfur protein family. In terms of assembly, the 4 large subunits of the cytochrome b6-f complex are cytochrome b6, subunit IV (17 kDa polypeptide, PetD), cytochrome f and the Rieske protein, while the 4 small subunits are PetG, PetL, PetM and PetN. The complex functions as a dimer. [2Fe-2S] cluster is required as a cofactor.

The protein resides in the cellular thylakoid membrane. It carries out the reaction 2 oxidized [plastocyanin] + a plastoquinol + 2 H(+)(in) = 2 reduced [plastocyanin] + a plastoquinone + 4 H(+)(out). In terms of biological role, component of the cytochrome b6-f complex, which mediates electron transfer between photosystem II (PSII) and photosystem I (PSI), cyclic electron flow around PSI, and state transitions. This Synechococcus sp. (strain JA-3-3Ab) (Cyanobacteria bacterium Yellowstone A-Prime) protein is Cytochrome b6-f complex iron-sulfur subunit.